The primary structure comprises 491 residues: UDP-N-acetylmuramate--L-alanine ligase (491 aa).

Residue 126–132 (GTHGKTT) participates in ATP binding.

The protein belongs to the MurCDEF family.

The protein resides in the cytoplasm. It carries out the reaction UDP-N-acetyl-alpha-D-muramate + L-alanine + ATP = UDP-N-acetyl-alpha-D-muramoyl-L-alanine + ADP + phosphate + H(+). It functions in the pathway cell wall biogenesis; peptidoglycan biosynthesis. Cell wall formation. In Enterobacter sp. (strain 638), this protein is UDP-N-acetylmuramate--L-alanine ligase.